We begin with the raw amino-acid sequence, 399 residues long: Acetate kinase (399 aa).

A Mg(2+)-binding site is contributed by asparagine 7. Lysine 14 serves as a coordination point for ATP. Arginine 91 provides a ligand contact to substrate. The active-site Proton donor/acceptor is aspartate 148. ATP is bound by residues 208–212 (HLGNG), 283–285 (DFR), and 331–335 (GLGEN). Residue glutamate 384 participates in Mg(2+) binding.

This sequence belongs to the acetokinase family. As to quaternary structure, homodimer. Mg(2+) is required as a cofactor. The cofactor is Mn(2+).

Its subcellular location is the cytoplasm. The catalysed reaction is acetate + ATP = acetyl phosphate + ADP. Its pathway is metabolic intermediate biosynthesis; acetyl-CoA biosynthesis; acetyl-CoA from acetate: step 1/2. Catalyzes the formation of acetyl phosphate from acetate and ATP. Can also catalyze the reverse reaction. The chain is Acetate kinase from Desulfitobacterium hafniense (strain Y51).